Reading from the N-terminus, the 339-residue chain is Uroporphyrinogen decarboxylase (339 aa).

Substrate-binding positions include 23–27 (RQAGR), aspartate 72, tyrosine 147, threonine 202, and histidine 315.

It belongs to the uroporphyrinogen decarboxylase family. As to quaternary structure, homodimer.

It localises to the cytoplasm. It catalyses the reaction uroporphyrinogen III + 4 H(+) = coproporphyrinogen III + 4 CO2. It functions in the pathway porphyrin-containing compound metabolism; protoporphyrin-IX biosynthesis; coproporphyrinogen-III from 5-aminolevulinate: step 4/4. Functionally, catalyzes the decarboxylation of four acetate groups of uroporphyrinogen-III to yield coproporphyrinogen-III. The sequence is that of Uroporphyrinogen decarboxylase from Geobacter sp. (strain M21).